We begin with the raw amino-acid sequence, 6306 residues long: MSVFLGPGMPSASLLVNLLSALLILFVFGETEIRFTGQTEFVVNETSTTVIRLIIERIGEPANVTAIVSLYGEDAGDFFDTYAAAFIPAGETNRTVYIAVCDDDLPEPDETFIFHLTLQKPSANVKLGWPRTVTVTILSNDNAFGIISFNMLPSIAVSEPKGRNESMPLTLIREKGTYGMVMVTFEVEGGPNPPDEDLSPVKGNITFPPGRATVIYNLTVLDDEVPENDEIFLIQLKSVEGGAEINTSRNSIEIIIKKNDSPVRFLQSIYLVPEEDHILIIPVVRGKDNNGNLIGSDEYEVSISYAVTTGNSTAHAQQNLDFIDLQPNTTVVFPPFIHESHLKFQIVDDTIPEIAESFHIMLLKDTLQGDAVLISPSVVQVTIKPNDKPYGVLSFNSVLFERTVIIDEDRISRYEEITVVRNGGTHGNVSANWVLTRNSTDPSPVTADIRPSSGVLHFAQGQMLATIPLTVVDDDLPEEAEAYLLQILPHTIRGGAEVSEPAELLFYIQDSDDVYGLITFFPMENQKIESSPGERYLSLSFTRLGGTKGDVRLLYSVLYIPAGAVDPLQAKEGILNISRRNDLIFPEQKTQVTTKLPIRNDAFLQNGAHFLVQLETVELLNIIPLIPPISPRFGEICNISLLVTPAIANGEIGFLSNLPIILHEPEDFAAEVVYIPLHRDGTDGQATVYWSLKPSGFNSKAVTPDDIGPFNGSVLFLSGQSDTTINITIKGDDIPEMNETVTLSLDRVNVENQVLKSGYTSRDLIILENDDPGGVFEFSPASRGPYVIKEGESVELHIIRSRGSLVKQFLHYRVEPRDSNEFYGNTGVLEFKPGEREIVITLLARLDGIPELDEHYWVVLSSHGERESKLGSATIVNITILKNDDPHGIIEFVSDGLIVMINESKGDAIYSAVYDVVRNRGNFGDVSVSWVVSPDFTQDVFPVQGTVVFGDQEFSKNITIYSLPDEIPEEMEEFTVILLNGTGGAKVGNRTTATLRIRRNDDPIYFAEPRVVRVQEGETANFTVLRNGSVDVTCMVQYATKDGKATARERDFIPVEKGETLIFEVGSRQQSISIFVNEDGIPETDEPFYIILLNSTGDTVVYQYGVATVIIEANDDPNGIFSLEPIDKAVEEGKTNAFWILRHRGYFGSVSVSWQLFQNDSALQPGQEFYETSGTVNFMDGEEAKPIILHAFPDKIPEFNEFYFLKLVNISGGSPGPGGQLAETNLQVTVMVPFNDDPFGVFILDPECLEREVAEDVLSEDDMSYITNFTILRQQGVFGDVQLGWEILSSEFPAGLPPMIDFLLVGIFPTTVHLQQHMRRHHSGTDALYFTGLEGAFGTVNPKYHPSRNNTIANFTFSAWVMPNANTNGFIIAKDDGNGSIYYGVKIQTNESHVTLSLHYKTLGSNATYIAKTTVMKYLEESVWLHLLIILEDGIIEFYLDGNAMPRGIKSLKGEAITDGPGILRIGAGINGNDRFTGLMQDVRSYERKLTLEEIYELHAMPAKSDLHPISGYLEFRQGETNKSFIISARDDNDEEGEELFILKLVSVYGGARISEENTTARLTIQKSDNANGLFGFTGACIPEIAEEGSTISCVVERTRGALDYVHVFYTISQIETDGINYLVDDFANASGTITFLPWQRSEVLNIYVLDDDIPELNEYFRVTLVSAIPGDGKLGSTPTSGASIDPEKETTDITIKASDHPYGLLQFSTGLPPQPKDAMTLPASSVPHITVEEEDGEIRLLVIRAQGLLGRVTAEFRTVSLTAFSPEDYQNVAGTLEFQPGERYKYIFINITDNSIPELEKSFKVELLNLEGGVAELFRVDGSGSGDGDMEFFLPTIHKRASLGVASQILVTIAASDHAHGVFEFSPESLFVSGTEPEDGYSTVTLNVIRHHGTLSPVTLHWNIDSDPDGDLAFTSGNITFEIGQTSANITVEILPDEDPELDKAFSVSVLSVSSGSLGAHINATLTVLASDDPYGIFIFSEKNRPVKVEEATQNITLSIIRLKGLMGKVLVSYATLDDMEKPPYFPPNLARATQGRDYIPASGFALFGANQSEATIAISILDDDEPERSESVFIELLNSTLVAKVQSRSIPNSPRLGPKVETIAQLIIIANDDAFGTLQLSAPIVRVAENHVGPIINVTRTGGAFADVSVKFKAVPITAIAGEDYSIASSDVVLLEGETSKAVPIYVINDIYPELEESFLVQLMNETTGGARLGALTEAVIIIEASDDPYGLFGFQITKLIVEEPEFNSVKVNLPIIRNSGTLGNVTVQWVATINGQLATGDLRVVSGNVTFAPGETIQTLLLEVLADDVPEIEEVIQVQLTDASGGGTIGLDRIANIIIPANDDPYGTVAFAQMVYRVQEPLERSSCANITVRRSGGHFGRLLLFYSTSDIDVVALAMEEGQDLLSYYESPIQGVPDPLWRTWMNVSAVGEPLYTCATLCLKEQACSAFSFFSASEGPQCFWMTSWISPAVNNSDFWTYRKNMTRVASLFSGQAVAGSDYEPVTRQWAIMQEGDEFANLTVSILPDDFPEMDESFLISLLEVHLMNISASLKNQPTIGQPNISTVVIALNGDAFGVFVIYNISPNTSEDGLFVEVQEQPQTLVELMIHRTGGSLGQVAVEWRVVGGTATEGLDFIGAGEILTFAEGETKKTVILTILDDSEPEDDESIIVSLVYTEGGSRILPSSDTVRVNILANDNVAGIVSFQTASRSVIGHEGEILQFHVIRTFPGRGNVTVNWKIIGQNLELNFANFSGQLFFPEGSLNTTLFVHLLDDNIPEEKEVYQVILYDVRTQGVPPAGIALLDAQGYAAVLTVEASDEPHGVLNFALSSRFVLLQEANITIQLFINREFGSLGAINVTYTTVPGMLSLKNQTVGNLAEPEVDFVPIIGFLILEEGETAAAINITILEDDVPELEEYFLVNLTYVGLTMAASTSFPPRLDSEGLTAQVIIDANDGARGVIEWQQSRFEVNETHGSLTLVAQRSREPLGHVSLFVYAQNLEAQVGLDYIFTPMILHFADGERYKNVNIMILDDDIPEGDEKFQLILTNPSPGLELGKNTIALIIVLANDDGPGVLSFNNSEHFFLREPTALYVQESVAVLYIVREPAQGLFGTVTVQFIVTEVNSSNESKDLTPSKGYIVLEEGVRFKALQISAILDTEPEMDEYFVCTLFNPTGGARLGVHVQTLITVLQNQAPLGLFSISAVENRATSIDIEEANRTVYLNVSRTNGIDLAVSVQWETVSETAFGMRGMDVVFSVFQSFLDESASGWCFFTLENLIYGIMLRKSSVTVYRWQGIFIPVEDLNIENPKTCEAFNIGFSPYFVITHEERNEEKPSLNSVFTFTSGFKLFLVQTIIILESSQVRYFTSDSQDYLIIASQRDDSELTQVFRWNGGSFVLHQKLPVRGVLTVALFNKGGSVFLAISQANARLNSLLFRWSGSGFINFQEVPVSGTTEVEALSSANDIYLIFAENVFLGDQNSIDIFIWEMGQSSFRYFQSVDFAAVNRIHSFTPASGIAHILLIGQDMSALYCWNSERNQFSFVLEVPSAYDVASVTVKSLNSSKNLIALVGAHSHIYELAYISSHSDFIPSSGELIFEPGEREATIAVNILDDTVPEKEESFKVQLKNPKGGAEIGINDSVTITILSNDDAYGIVAFAQNSLYKQVEEMEQDSLVTLNVERLKGTYGRITIAWEADGSISDIFPTSGVILFTEGQVLSTITLTILADNIPELSEVVIVTLTRITTEGVEDSYKGATIDQDRSKSVITTLPNDSPFGLVGWRAASVFIRVAEPKENTTTLQLQIARDKGLLGDIAIHLRAQPNFLLHVDNQATENEDYVLQETIIIMKENIKEAHAEVSILPDDLPELEEGFIVTITEVNLVNSDFSTGQPSVRRPGMEIAEIMIEENDDPRGIFMFHVTRGAGEVITAYEVPPPLNVLQVPVVRLAGSFGAVNVYWKASPDSAGLEDFKPSHGILEFADKQVTAMIEITIIDDAEFELTETFNISLISVAGGGRLGDDVVVTVVIPQNDSPFGVFGFEEKTVMIDESLSSDDPDSYVTLTVVRSPGGKGTVRLEWTIDEKAKHNLSPLNGTLHFDETESQKTIVLHTLQDTVLEEDRRFTIQLISIDEVEISPVKGSASIIIRGDKRASGEVGIAPSSRHILIGEPSAKYNGTAIISLVRGPGILGEVTVFWRIFPPSVGEFAETSGKLTMRDEQSAVIVVIQALNDDIPEEKSFYEFQLTAVSEGGVLSESSSTANITVVASDSPYGRFAFSHEQLRVSEAQRVNITIIRSSGDFGHVRLWYKTMSGTAEAGLDFVPAAGELLFEAGEMRKSLHVEILDDDYPEGPEEFSLTITKVELQGRGYDFTIQENGLQIDQPPEIGNISIVRIIIMKNDNAEGIIEFDPKYTAFEVEEDVGLIMIPVVRLHGTYGYVTADFISQSSSASPGGVDYILHGSTVTFQHGQNLSFINISIIDDNESEFEEPIEILLTGATGGAVLGRHLVSRIIIAKSDSPFGVIRFLNQSKISIANPNSTMILSLVLERTGGLLGEIQVNWETVGPNSQEALLPQNRDIADPVSGLFYFGEGEGGVRTIILTIYPHEEIEVEETFIIKLHLVKGEAKLDSRAKDVTLTIQEFGDPNGVVQFAPETLSKKTYSEPLALEGPLLITFFVRRVKGTFGEIMVYWELSSEFDITEDFLSTSGFFTIADGESEASFDVHLLPDEVPEIEEDYVIQLVSVEGGAELDLEKSITWFSVYANDDPHGVFALYSDRQSILIGQNLIRSIQINITRLAGTFGDVAVGLRISSDHKEQPIVTENAERQLVVKDGATYKVDVVPIKNQVFLSLGSNFTLQLVTVMLVGGRFYGMPTILQEAKSAVLPVSEKAANSQVGFESTAFQLMNITAGTSHVMISRRGTYGALSVAWTTGYAPGLEIPEFIVVGNMTPTLGSLSFSHGEQRKGVFLWTFPSPGWPEAFVLHLSGVQSSAPGGAQLRSGFIVAEIEPMGVFQFSTSSRNIIVSEDTQMIRLHVQRLFGFHSDLIKVSYQTTAGSAKPLEDFEPVQNGELFFQKFQTEVDFEITIINDQLSEIEEFFYINLTSVEIRGLQKFDVNWSPRLNLDFSVAVITILDNDDLAGMDISFPETTVAVAVDTTLIPVETESTTYLSTSKTTTILQPTNVVAIVTEATGVSAIPEKLVTLHGTPAVSEKPDVATVTANVSIHGTFSLGPSIVYIEEEMKNGTFNTAEVLIRRTGGFTGNVSITVKTFGERCAQMEPNALPFRGIYGISNLTWAVEEEDFEEQTLTLIFLDGERERKVSVQILDDDEPEGQEFFYVFLTNPQGGAQIVEEKDDTGFAAFAMVIITGSDLHNGIIGFSEESQSGLELREGAVMRRLHLIVTRQPNRAFEDVKVFWRVTLNKTVVVLQKDGVNLVEELQSVSGTTTCTMGQTKCFISIELKPEKVPQVEVYFFVELYEATAGAAINNSARFAQIKILESDESQSLVYFSVGSRLAVAHKKATLISLQVARDSGTGLMMSVNFSTQELRSAETIGRTIISPAISGKDFVITEGTLVFEPGQRSTVLDVILTPETGSLNSFPKRFQIVLFDPKGGARIDKVYGTANITLVSDADSQAIWGLADQLHQPVNDDILNRVLHTISMKVATENTDEQLSAMMHLIEKITTEGKIQAFSVASRTLFYEILCSLINPKRKDTRGFSHFAEVTENFAFSLLTNVTCGSPGEKSKTILDSCPYLSILALHWYPQQINGHKFEGKEGDYIRIPERLLDVQDAEIMAGKSTCKLVQFTEYSSQQWFISGNNLPTLKNKVLSLSVKGQSSQLLTNDNEVLYRIYAAEPRIIPQTSLCLLWNQAAASWLSDSQFCKVVEETADYVECACSHMSVYAVYARTDNLSSYNEAFFTSGFICISGLCLAVLSHIFCARYSMFAAKLLTHMMAASLGTQILFLASAYASPQLAEESCSAMAAVTHYLYLCQFSWMLIQSVNFWYVLVMNDEHTERRYLLFFLLSWGLPAFVVILLIVILKGIYHQSMSQIYGLIHGDLCFIPNVYAALFTAALVPLTCLVVVFVVFIHAYQVKPQWKAYDDVFRGRTNAAEIPLILYLFALISVTWLWGGLHMAYRHFWMLVLFVIFNSLQGLYVFMVYFILHNQMCCPMKASYTVEMNGHPGPSTAFFTPGSGMPPAGGEISKSTQNLIGAMEEVPPDWERASFQQGSQASPDLKPSPQNGATFPSSGGYGQGSLIADEESQEFDDLIFALKTGAGLSVSDNESGQGSQEGGTLTDSQIVELRRIPIADTHL.

Positions 1–29 are cleaved as a signal peptide; the sequence is MSVFLGPGMPSASLLVNLLSALLILFVFG. 22 consecutive Calx-beta domains span residues 30-117, 133-237, 262-362, 388-488, 645-745, 763-861, 876-979, 993-1093, 1108-1208, 1444-1544, 1564-1665, 1710-1809, 1850-1952, 1966-2079, 2107-2206, 2222-2324, 2441-2541, 2584-2676, 2689-2789, 2814-2925, 2947-3048, and 3063-3172; these read ETEI…FHLT, VTVT…IQLK, PVRF…HIML, KPYG…LQIL, PAIA…TLSL, DLII…VVLS, VNIT…VILL, ATLR…IILL, TVII…LKLV, AMPR…FILK, TIQK…RVTL, TGLP…VELL, ILVT…VSVL, TLTV…IELL, QLII…VQLM, VIII…VQLT, TLCL…FLIS, NISP…VSLV, DTVR…QVIL, LTVE…VNLT, TAQV…LILT, and LIIV…CTLF. At 30–5908 the chain is on the extracellular side; sequence ETEIRFTGQT…TDNLSSYNEA (5879 aa). EAR repeat units follow at residues 3255 to 3296, 3297 to 3345, 3348 to 3393, 3395 to 3439, 3441 to 3488, and 3492 to 3534; these read VFSV…RWQG, IFIP…TFTS, KLFL…RWNG, SFVL…RWSG, GFIN…IWEM, and SFRY…CWNS. 13 consecutive Calx-beta domains span residues 3525 to 3625, 3639 to 3739, 3775 to 3875, 3899 to 4006, 4020 to 4123, 4139 to 4239, 4255 to 4354, 4387 to 4489, 4512 to 4612, 4634 to 4734, 4992 to 5095, 5288 to 5332, and 5368 to 5468; these read DMSA…KVQL, SVTI…IVTL, GLVG…VTIT, AEIM…ISLI, VTVV…IQLI, IIIR…EFQL, ANIT…LTIT, RIII…ILLT, SPFG…IIKL, EFGD…VIQL, SGFI…INLT, AVEE…YVFL, and IGFS…FVEL. Positions 5747 to 5903 constitute a GAIN-B domain; that stretch reads SILALHWYPQ…AVYARTDNLS (157 aa). Intrachain disulfides connect Cys5856-Cys5885 and Cys5873-Cys5887. Residues 5856–5903 form a GPS region; it reads CLLWNQAAASWLSDSQFCKVVEETADYVECACSHMSVYAVYARTDNLS. Residues 5909–5929 traverse the membrane as a helical segment; the sequence is FFTSGFICISGLCLAVLSHIF. Residues 5930-5939 lie on the Cytoplasmic side of the membrane; sequence CARYSMFAAK. Residues 5940–5960 traverse the membrane as a helical segment; that stretch reads LLTHMMAASLGTQILFLASAY. Over 5961-5979 the chain is Extracellular; it reads ASPQLAEESCSAMAAVTHY. A helical membrane pass occupies residues 5980-6000; sequence LYLCQFSWMLIQSVNFWYVLV. Residues 6001–6010 lie on the Cytoplasmic side of the membrane; it reads MNDEHTERRY. Residues 6011 to 6031 form a helical membrane-spanning segment; sequence LLFFLLSWGLPAFVVILLIVI. The Extracellular segment spans residues 6032-6059; the sequence is LKGIYHQSMSQIYGLIHGDLCFIPNVYA. Residues 6060 to 6080 form a helical membrane-spanning segment; the sequence is ALFTAALVPLTCLVVVFVVFI. Residues 6081–6104 are Cytoplasmic-facing; the sequence is HAYQVKPQWKAYDDVFRGRTNAAE. The helical transmembrane segment at 6105 to 6125 threads the bilayer; that stretch reads IPLILYLFALISVTWLWGGLH. At 6126-6133 the chain is on the extracellular side; that stretch reads MAYRHFWM. Residues 6134–6154 form a helical membrane-spanning segment; the sequence is LVLFVIFNSLQGLYVFMVYFI. The Cytoplasmic segment spans residues 6155-6306; sequence LHNQMCCPMK…RRIPIADTHL (152 aa). The interval 6216-6248 is disordered; it reads ASFQQGSQASPDLKPSPQNGATFPSSGGYGQGS. Residues 6217–6240 show a composition bias toward polar residues; the sequence is SFQQGSQASPDLKPSPQNGATFPS.

Belongs to the G-protein coupled receptor 2 family. Adhesion G-protein coupled receptor (ADGR) subfamily. As to quaternary structure, forms a heterodimer, consisting of a large extracellular region (alpha subunit) non-covalently linked to a seven-transmembrane moiety (beta subunit). Component of USH2 complex, composed of ADGRV1, PDZD7, USH2A and WHRN. Interacts with USH2A and WHRN. Interacts (via the cytoplasmic region) with PDZD7. Interacts (via the cytoplasmic region) with MYO7A (via MyTH4-FERM domains). Post-translationally, autoproteolytically cleaved into 2 subunits, an extracellular alpha subunit and a seven-transmembrane subunit. Expressed at low levels in adult tissues.

It localises to the cell membrane. Its subcellular location is the cell projection. The protein localises to the stereocilium membrane. The protein resides in the photoreceptor inner segment. Functionally, G-protein coupled receptor which has an essential role in the development of hearing and vision. Couples to G-alpha(i)-proteins, GNAI1/2/3, G-alpha(q)-proteins, GNAQ, as well as G-alpha(s)-proteins, GNAS, inhibiting adenylate cyclase (AC) activity and cAMP production. Required for the hair bundle ankle formation, which connects growing stereocilia in developing cochlear hair cells of the inner ear. In response to extracellular calcium, activates kinases PKA and PKC to regulate myelination by inhibiting the ubiquitination of MAG, thus enhancing the stability of this protein in myelin-forming cells of the auditory pathway. In retina photoreceptors, the USH2 complex is required for the maintenance of periciliary membrane complex that seems to play a role in regulating intracellular protein transport. Involved in the regulation of bone metabolism. In terms of biological role, cleaved ADGRV1 beta-subunit couples with G-alpha(i)-proteins, GNAI1/2/3, and constitutively inhibits adenylate cyclase (AC) activity with a stronger effect than full ADGRV1. The protein is Adhesion G-protein coupled receptor V1 of Homo sapiens (Human).